Consider the following 544-residue polypeptide: Chaperonin GroEL 1 (544 aa).

Residues 30–33 (TLGP), lysine 51, 87–91 (DGTTT), glycine 415, and aspartate 494 contribute to the ATP site.

The protein belongs to the chaperonin (HSP60) family. Forms a cylinder of 14 subunits composed of two heptameric rings stacked back-to-back. Interacts with the co-chaperonin GroES.

The protein localises to the cytoplasm. The enzyme catalyses ATP + H2O + a folded polypeptide = ADP + phosphate + an unfolded polypeptide.. Functionally, together with its co-chaperonin GroES, plays an essential role in assisting protein folding. The GroEL-GroES system forms a nano-cage that allows encapsulation of the non-native substrate proteins and provides a physical environment optimized to promote and accelerate protein folding. This is Chaperonin GroEL 1 from Syntrophus aciditrophicus (strain SB).